A 509-amino-acid polypeptide reads, in one-letter code: Transmembrane protein 102 (509 aa).

The Extracellular segment spans residues methionine 1–arginine 312. The segment at proline 167 to threonine 236 is disordered. Over residues aspartate 174–proline 204 the composition is skewed to basic and acidic residues. A compositionally biased stretch (low complexity) spans serine 207 to aspartate 224. The chain crosses the membrane as a helical span at residues histidine 313–proline 329. The Cytoplasmic portion of the chain corresponds to aspartate 330–histidine 509.

As to quaternary structure, interacts with CSF2RB; this interaction occurs preferentially in the absence of CSF2.

The protein resides in the cell membrane. Functionally, selectively involved in CSF2 deprivation-induced apoptosis via a mitochondria-dependent pathway. This is Transmembrane protein 102 (Tmem102) from Mus musculus (Mouse).